The primary structure comprises 467 residues: Acid phosphatase PHO12 (467 aa).

A signal peptide spans 1 to 17 (MLKSAVYSILAASLVNA). His-75 (nucleophile) is an active-site residue. Asn-97, Asn-162, Asn-192, Asn-250, and Asn-315 each carry an N-linked (GlcNAc...) asparagine glycan. Asp-338 functions as the Proton donor in the catalytic mechanism. Residues Asn-356, Asn-390, Asn-439, Asn-445, and Asn-461 are each glycosylated (N-linked (GlcNAc...) asparagine).

Belongs to the histidine acid phosphatase family. Glycosylated during secretion across the membrane.

The catalysed reaction is a phosphate monoester + H2O = an alcohol + phosphate. The polypeptide is Acid phosphatase PHO12 (PHO12) (Saccharomyces cerevisiae (strain ATCC 204508 / S288c) (Baker's yeast)).